Reading from the N-terminus, the 164-residue chain is Transcription factor E (164 aa).

In terms of domain architecture, HTH TFE/IIEalpha-type spans 5-87; the sequence is NDKVIRGYLR…LWHLDFSDIE (83 aa).

Belongs to the TFE family. Monomer. Interaction with RNA polymerase subunits RpoF and RpoE is necessary for Tfe stimulatory transcription activity. Able to interact with Tbp and RNA polymerase in the absence of DNA promoter. Interacts both with the preinitiation and elongation complexes.

Functionally, transcription factor that plays a role in the activation of archaeal genes transcribed by RNA polymerase. Facilitates transcription initiation by enhancing TATA-box recognition by TATA-box-binding protein (Tbp), and transcription factor B (Tfb) and RNA polymerase recruitment. Not absolutely required for transcription in vitro, but particularly important in cases where Tbp or Tfb function is not optimal. It dynamically alters the nucleic acid-binding properties of RNA polymerases by stabilizing the initiation complex and destabilizing elongation complexes. Seems to translocate with the RNA polymerase following initiation and acts by binding to the non template strand of the transcription bubble in elongation complexes. This is Transcription factor E from Methanosarcina mazei (strain ATCC BAA-159 / DSM 3647 / Goe1 / Go1 / JCM 11833 / OCM 88) (Methanosarcina frisia).